A 410-amino-acid chain; its full sequence is MFRLGDFNYHNKVVFLRVDLNSPMKDGKIISDARFRAVLPTIKYLLENGARVVVGTHQGKPYSEDYATTEEHARILSNLLNQHVEYVEDIFGRYAREKIQELKPGEIAMLENLRFSAEEVKNKPIEECEKTFFVKKLSKVIDYVVNDAFAAAHRSQPSLVGFARIKPMIMGFLMEREIEALMKAYYSKESPRVYVLGGAKVDDSLKVAENVLRRGFADVILTGGLVANVFTLAKGFDLGRKNIEFMKKKGLLELVKHAEKILDEFYPYVRTPVDFAIDYKGDREEIYLLSEKRELLNDYQIMDIGSRTIEKYRDIIMKAKVVVANGPMGVFEREEFALGTVEVFKAIAESEAFSVLGGGHSIASIQKYGIEGITHISTGGGAMLTFFAGEELPVLRALQISYEKFKEVKA.

Substrate is bound by residues 19–21 (DLN), arginine 34, 57–60 (HQGK), arginine 114, and arginine 154. ATP is bound by residues glutamate 332 and 358-361 (GGHS).

This sequence belongs to the phosphoglycerate kinase family. In terms of assembly, homodimer.

It is found in the cytoplasm. The enzyme catalyses (2R)-3-phosphoglycerate + ATP = (2R)-3-phospho-glyceroyl phosphate + ADP. It participates in carbohydrate degradation; glycolysis; pyruvate from D-glyceraldehyde 3-phosphate: step 2/5. This Pyrococcus abyssi (strain GE5 / Orsay) protein is Phosphoglycerate kinase (pgk).